The chain runs to 747 residues: Beta-glucosidase BoGH3A (747 aa).

Residues 1 to 26 (MIIGIMKTFLLTICFLSVQTGMVAIA) form the signal peptide. Asp-273 is an active-site residue.

Belongs to the glycosyl hydrolase 3 family.

Its subcellular location is the periplasm. It catalyses the reaction Hydrolysis of terminal, non-reducing beta-D-glucosyl residues with release of beta-D-glucose.. It functions in the pathway glucan metabolism; xyloglucan degradation. Functionally, catalyzes the hydrolysis of terminal, non-reducing beta-D-glucosyl residues with release of beta-D-glucose in xyloglucan degradation, leading to remove the backbone 'G' units. The chain is Beta-glucosidase BoGH3A from Bacteroides ovatus (strain ATCC 8483 / DSM 1896 / JCM 5824 / BCRC 10623 / CCUG 4943 / NCTC 11153).